The sequence spans 245 residues: 8-amino-3,8-dideoxy-manno-octulosonate cytidylyltransferase (245 aa).

This sequence belongs to the KdsB family.

The protein resides in the cytoplasm. It carries out the reaction 8-amino-3,8-dideoxy-alpha-D-manno-octulosonate + CTP = CMP-8-amino-3,8-dideoxy-alpha-D-manno-oct-2-ulosonate + diphosphate. Its pathway is bacterial outer membrane biogenesis; lipopolysaccharide biosynthesis. Functionally, activates KDO8N (a required 8-carbon sugar) for incorporation into bacterial lipopolysaccharide in the Shewanella genus. The chain is 8-amino-3,8-dideoxy-manno-octulosonate cytidylyltransferase from Shewanella baltica (strain OS185).